The sequence spans 215 residues: Ribose-5-phosphate isomerase A (215 aa).

Residues 26–29 (TGST), 79–82 (DGAD), and 92–95 (KGGG) each bind substrate. Residue Glu101 is the Proton acceptor of the active site. Residue Lys119 coordinates substrate.

It belongs to the ribose 5-phosphate isomerase family. In terms of assembly, homodimer.

The catalysed reaction is aldehydo-D-ribose 5-phosphate = D-ribulose 5-phosphate. It functions in the pathway carbohydrate degradation; pentose phosphate pathway; D-ribose 5-phosphate from D-ribulose 5-phosphate (non-oxidative stage): step 1/1. Functionally, catalyzes the reversible conversion of ribose-5-phosphate to ribulose 5-phosphate. The chain is Ribose-5-phosphate isomerase A from Xylella fastidiosa (strain Temecula1 / ATCC 700964).